A 175-amino-acid chain; its full sequence is Ribosome maturation factor RimM (175 aa).

Residues 99–172 (EGEFHLLDLV…WLRLTPPPGL (74 aa)) form the PRC barrel domain.

It belongs to the RimM family. In terms of assembly, binds ribosomal protein uS19.

The protein resides in the cytoplasm. Its function is as follows. An accessory protein needed during the final step in the assembly of 30S ribosomal subunit, possibly for assembly of the head region. Essential for efficient processing of 16S rRNA. May be needed both before and after RbfA during the maturation of 16S rRNA. It has affinity for free ribosomal 30S subunits but not for 70S ribosomes. The sequence is that of Ribosome maturation factor RimM from Synechococcus sp. (strain WH7803).